A 111-amino-acid chain; its full sequence is SPbeta prophage-derived uncharacterized protein YopW (111 aa).

The chain is SPbeta prophage-derived uncharacterized protein YopW (yopW) from Bacillus subtilis (strain 168).